The chain runs to 1567 residues: ABC multidrug transporter MDR1 (1567 aa).

Pro residues predominate over residues 1-11 (MASQPPQPPSG). The interval 1 to 37 (MASQPPQPPSGQPDTQYEEYQSEVITETTNRPTPAAD) is disordered. Polar residues predominate over residues 22–32 (SEVITETTNRP). Residues N149, N157, and N356 are each glycosylated (N-linked (GlcNAc...) asparagine). The ABC transporter 1 domain occupies 167–432 (VQYQDTFLSP…FEEMGWYCPP (266 aa)). The next 6 membrane-spanning stretches (helical) occupy residues 543–563 (STIATNISQIMMALIIGSLFF), 571–591 (GFFAKGSVIFFAILLNGLMSI), 636–656 (IPIKFLLALVFNIIIYFLGGL), 661–681 (AKFFIFFLFTFITILTMSAIF), 691–711 (IPQALALAGVMILALVIYTGF), and 798–818 (LGILLGFLAFFYFVYLMVSEL). N819, N895, and N912 each carry an N-linked (GlcNAc...) asparagine glycan. The region spanning 891-1134 (FTWRNVTYDI…LLNYFETHGA (244 aa)) is the ABC transporter 2 domain. 927–934 (GVSGAGKT) contributes to the ATP binding site. A disordered region spans residues 1172-1202 (ESRHVQQELDRIQSETSKRNEGHGQSAEKEP). Residues 1231 to 1251 (IWGKLLLGLASALFIGFSFFL) traverse the membrane as a helical segment. N1253 carries an N-linked (GlcNAc...) asparagine glycan. The next 5 helical transmembrane spans lie at 1257–1277 (AGLQNSLFSIFMLTTIFSSLV), 1305–1325 (VFLLANIIVEIPYQILLGIIA), 1345–1365 (ILLLYCVQFFIFASTFAQMII), 1372–1392 (ETAGGIATTMFGLMVTFNGVL), and 1498–1518 (GIGWAYIVFNIFATVALYYLI).

Belongs to the ABC transporter superfamily. ABCG family. PDR (TC 3.A.1.205) subfamily.

The protein localises to the cell membrane. It carries out the reaction voriconazole(in) + ATP + H2O = voriconazole(out) + ADP + phosphate + H(+). The catalysed reaction is fluconazole(in) + ATP + H2O = fluconazole(out) + ADP + phosphate + H(+). It catalyses the reaction (R)-miconazole(in) + ATP + H2O = (R)-miconazole(out) + ADP + phosphate + H(+). The enzyme catalyses (S)-miconazole(in) + ATP + H2O = (S)-miconazole(out) + ADP + phosphate + H(+). In terms of biological role, pleiotropic ABC efflux transporter that may be involved in the modulation susceptibility to a wide range of unrelated cytotoxic compounds, including ethidium bromide, ketoconazole, cycloheximide, fluconazole, griseofulvin, imazalil and itraconazole. This is ABC multidrug transporter MDR1 from Trichophyton interdigitale (strain MR816).